The primary structure comprises 311 residues: tRNA dimethylallyltransferase (311 aa).

An ATP-binding site is contributed by 10–17; that stretch reads GPTAVGKT. Residue 12–17 coordinates substrate; it reads TAVGKT. The interaction with substrate tRNA stretch occupies residues 35-38; that stretch reads DSMQ.

This sequence belongs to the IPP transferase family. In terms of assembly, monomer. Mg(2+) serves as cofactor.

It catalyses the reaction adenosine(37) in tRNA + dimethylallyl diphosphate = N(6)-dimethylallyladenosine(37) in tRNA + diphosphate. Catalyzes the transfer of a dimethylallyl group onto the adenine at position 37 in tRNAs that read codons beginning with uridine, leading to the formation of N6-(dimethylallyl)adenosine (i(6)A). This chain is tRNA dimethylallyltransferase, found in Anoxybacillus flavithermus (strain DSM 21510 / WK1).